The following is a 338-amino-acid chain: Ribosomal RNA small subunit methyltransferase C (338 aa).

Belongs to the methyltransferase superfamily. RsmC family. In terms of assembly, monomer.

The protein localises to the cytoplasm. The catalysed reaction is guanosine(1207) in 16S rRNA + S-adenosyl-L-methionine = N(2)-methylguanosine(1207) in 16S rRNA + S-adenosyl-L-homocysteine + H(+). In terms of biological role, specifically methylates the guanine in position 1207 of 16S rRNA in the 30S particle. The sequence is that of Ribosomal RNA small subunit methyltransferase C from Buchnera aphidicola subsp. Acyrthosiphon pisum (strain APS) (Acyrthosiphon pisum symbiotic bacterium).